A 77-amino-acid chain; its full sequence is MKEQKWIHEGLITESLPNGMFWVRLDNEDPILGYVSGRIRRSSIRILPGDRVKIEVSRYDSTRGRIIYRLRNKDSND.

Residues 1-71 enclose the S1-like domain; that stretch reads MKEQKWIHEG…TRGRIIYRLR (71 aa).

The protein belongs to the IF-1 family. As to quaternary structure, component of the 30S ribosomal translation pre-initiation complex which assembles on the 30S ribosome in the order IF-2 and IF-3, IF-1 and N-formylmethionyl-tRNA(fMet); mRNA recruitment can occur at any time during PIC assembly.

Its subcellular location is the plastid. It is found in the chloroplast. Functionally, one of the essential components for the initiation of protein synthesis. Stabilizes the binding of IF-2 and IF-3 on the 30S subunit to which N-formylmethionyl-tRNA(fMet) subsequently binds. Helps modulate mRNA selection, yielding the 30S pre-initiation complex (PIC). Upon addition of the 50S ribosomal subunit IF-1, IF-2 and IF-3 are released leaving the mature 70S translation initiation complex. In Spinacia oleracea (Spinach), this protein is Translation initiation factor IF-1, chloroplastic.